The primary structure comprises 184 residues: Shikimate kinase (184 aa).

ATP is bound at residue 17–22; the sequence is SVGKTS. Mg(2+) is bound at residue threonine 21. The substrate site is built by aspartate 39 and glycine 85.

Belongs to the shikimate kinase family. Monomer. The cofactor is Mg(2+).

It is found in the cytoplasm. It catalyses the reaction shikimate + ATP = 3-phosphoshikimate + ADP + H(+). It participates in metabolic intermediate biosynthesis; chorismate biosynthesis; chorismate from D-erythrose 4-phosphate and phosphoenolpyruvate: step 5/7. In terms of biological role, catalyzes the specific phosphorylation of the 3-hydroxyl group of shikimic acid using ATP as a cosubstrate. This Chlamydia muridarum (strain MoPn / Nigg) protein is Shikimate kinase.